A 245-amino-acid polypeptide reads, in one-letter code: Ribonuclease 3 (245 aa).

The RNase III domain occupies 19-148 (FKVFQEKIGI…FIGALYLDQG (130 aa)). Residue Glu61 participates in Mg(2+) binding. Asp65 is a catalytic residue. Residues Asp134 and Glu137 each contribute to the Mg(2+) site. The active site involves Glu137. The DRBM domain maps to 174–243 (DYKSQLQELI…AAEALKKLKE (70 aa)).

It belongs to the ribonuclease III family. Homodimer. Mg(2+) is required as a cofactor.

Its subcellular location is the cytoplasm. It carries out the reaction Endonucleolytic cleavage to 5'-phosphomonoester.. Digests double-stranded RNA. Involved in the processing of primary rRNA transcript to yield the immediate precursors to the large and small rRNAs (23S and 16S). Processes some mRNAs, and tRNAs when they are encoded in the rRNA operon. Processes pre-crRNA and tracrRNA of type II CRISPR loci if present in the organism. The polypeptide is Ribonuclease 3 (Bacillus cereus (strain ATCC 14579 / DSM 31 / CCUG 7414 / JCM 2152 / NBRC 15305 / NCIMB 9373 / NCTC 2599 / NRRL B-3711)).